The sequence spans 172 residues: Endoribonuclease YbeY (172 aa).

The Zn(2+) site is built by His-134, His-138, and His-144.

This sequence belongs to the endoribonuclease YbeY family. Zn(2+) is required as a cofactor.

The protein resides in the cytoplasm. In terms of biological role, single strand-specific metallo-endoribonuclease involved in late-stage 70S ribosome quality control and in maturation of the 3' terminus of the 16S rRNA. In Burkholderia cenocepacia (strain HI2424), this protein is Endoribonuclease YbeY.